The chain runs to 561 residues: SUN domain-containing protein 5 (561 aa).

The chain crosses the membrane as a helical span at residues 36–56 (GSFFERSISLVLLLWCFLFLV). Positions 158–318 (NGSSQLVNNG…SVVEVFGIDA (161 aa)) constitute an SUN domain. Positions 345–367 (ADEKQDGEIKSNRTDQIGKETEA) are disordered. Positions 454–499 (MEKELRDLELWKTLVASRVESLARGNSALRLDVEKIVKEQANLESK) form a coiled coil. Transmembrane regions (helical) follow at residues 501–521 (LGVL…LVST) and 540–560 (PDSG…IHLL).

As to quaternary structure, forms homomers. Interacts with SUN3 and TIK.

The protein resides in the membrane. In terms of biological role, encodes a member of the mid-SUN subfamily of SUN-domain proteins. It is involved in early seed development and nuclear morphology. [TAIR]. This is SUN domain-containing protein 5 from Arabidopsis thaliana (Mouse-ear cress).